The primary structure comprises 280 residues: Acetyl-coenzyme A carboxylase carboxyl transferase subunit beta (280 aa).

In terms of domain architecture, CoA carboxyltransferase N-terminal spans 24–280 (AWIKCDKCKN…IYTLIRHTHG (257 aa)). Residues Cys-28, Cys-31, Cys-47, and Cys-50 each contribute to the Zn(2+) site. Residues 28-50 (CDKCKNILYIEDLLKNLKICPHC) form a C4-type zinc finger.

Belongs to the AccD/PCCB family. In terms of assembly, acetyl-CoA carboxylase is a heterohexamer composed of biotin carboxyl carrier protein (AccB), biotin carboxylase (AccC) and two subunits each of ACCase subunit alpha (AccA) and ACCase subunit beta (AccD). Zn(2+) serves as cofactor.

It localises to the cytoplasm. It catalyses the reaction N(6)-carboxybiotinyl-L-lysyl-[protein] + acetyl-CoA = N(6)-biotinyl-L-lysyl-[protein] + malonyl-CoA. It functions in the pathway lipid metabolism; malonyl-CoA biosynthesis; malonyl-CoA from acetyl-CoA: step 1/1. Its function is as follows. Component of the acetyl coenzyme A carboxylase (ACC) complex. Biotin carboxylase (BC) catalyzes the carboxylation of biotin on its carrier protein (BCCP) and then the CO(2) group is transferred by the transcarboxylase to acetyl-CoA to form malonyl-CoA. The polypeptide is Acetyl-coenzyme A carboxylase carboxyl transferase subunit beta (Sulfurihydrogenibium sp. (strain YO3AOP1)).